The following is a 577-amino-acid chain: BICD family-like cargo adapter 1 (577 aa).

The tract at residues Leu-63–Pro-100 is disordered. Over residues Arg-69–Ala-79 the composition is skewed to basic and acidic residues. Positions Ala-116–Gly-120 match the CC1 box motif. The stretch at Lys-121–Arg-379 forms a coiled coil. Positions Asp-389 to Ala-415 are disordered. The span at Ser-390–Ser-399 shows a compositional bias: low complexity. A coiled-coil region spans residues Leu-443–Arg-528.

It belongs to the BICDR family. Part of a tripartite complex with dynein and dynactin, acts an adapter linking the dynein motor complex and dynactin. Interacts with KIF1C. Interacts with RAB6A and RAB6B; interaction is specific to Rab6. As to expression, highly expressed during early embryonic development. Predominantly expressed in kidney, undifferentiated neural tissue and developing eye.

The protein localises to the cytoplasm. It localises to the cytoskeleton. Its subcellular location is the microtubule organizing center. It is found in the centrosome. Acts as an adapter protein linking the dynein motor complex to various cargos and converts dynein from a non-processive to a highly processive motor in the presence of dynactin. Facilitates the interaction between dynein and dynactin and activates dynein processivity (the ability to move along a microtubule for a long distance without falling off the track). Predominantly recruits 2 dyneins, which increases both the force and speed of the microtubule motor. Component of secretory vesicle machinery in developing neurons that acts as a regulator of neurite outgrowth. Regulates the secretory vesicle transport by controlling the accumulation of Rab6-containing secretory vesicles in the pericentrosomal region restricting anterograde secretory transport during the early phase of neuronal differentiation, thereby inhibiting neuritogenesis. The protein is BICD family-like cargo adapter 1 (Bicdl1) of Mus musculus (Mouse).